The primary structure comprises 211 residues: Ceramide-1-phosphate transfer protein (211 aa).

An N-acylsphingoid base 1-phosphate contacts are provided by Asp-53, Lys-57, Arg-103, Arg-107, and His-147.

The protein belongs to the GLTP family.

It is found in the cytoplasm. The protein resides in the cytosol. Its subcellular location is the golgi apparatus. The protein localises to the trans-Golgi network membrane. It localises to the cell membrane. It is found in the endosome membrane. The protein resides in the nucleus outer membrane. The enzyme catalyses N-(hexadecanoyl)-sphing-4-enine-1-phosphate(in) = N-(hexadecanoyl)-sphing-4-enine-1-phosphate(out). It catalyses the reaction N-(9Z-octadecenoyl)-sphing-4-enine-1-phosphate(in) = N-(9Z-octadecenoyl)-sphing-4-enine-1-phosphate(out). Its function is as follows. Mediates the intracellular transfer of ceramide-1-phosphate (C1P) between organelle membranes and the cell membrane. Required for normal structure of the Golgi stacks. Can bind phosphoceramides with a variety of aliphatic chains, but has a preference for lipids with saturated C16:0 or monounsaturated C18:1 aliphatic chains, and is inefficient with phosphoceramides containing lignoceryl (C24:0). Plays a role in the regulation of the cellular levels of ceramide-1-phosphate, and thereby contributes to the regulation of phospholipase PLA2G4A activity and the release of arachidonic acid. Has no activity with galactosylceramide, lactosylceramide, sphingomyelin, phosphatidylcholine, phosphatidic acid and ceramide. C1P transfer is stimulated by phosphatidylserine in C1P source vesicles. Regulates autophagy and pyroptosis, but not apoptosis. This Danio rerio (Zebrafish) protein is Ceramide-1-phosphate transfer protein (cptp).